We begin with the raw amino-acid sequence, 130 residues long: Ribosome biogenesis inhibitor MINAS-60 (130 aa).

The segment at 61–130 is disordered; the sequence is SKVQRIPTRP…RRRRPVTSSC (70 aa). Basic residues predominate over residues 109–130; it reads KGRRRRRRMRRRRRRRPVTSSC.

Interacts with 60S ribosome assembly factors GTPBP4 and MRTO4.

The protein localises to the nucleus. Its subcellular location is the nucleolus. Its function is as follows. Acts as a late-stage inhibitor of pre-60S ribosome assembly by preventing pre-60S ribosome export from nucleus. This Mus musculus (Mouse) protein is Ribosome biogenesis inhibitor MINAS-60.